Reading from the N-terminus, the 520-residue chain is Glucose starvation modulator protein 1 (520 aa).

A DNA-binding region (zn(2)-C6 fungal-type) is located at residues 20–48 (CVFCHEKHLQCSNERPCKNCVKRGLAHEC). Positions 376–445 (DYEKLSQLNS…FRLFKTVAVG (70 aa)) constitute a PAS domain.

It belongs to the ERT1/acuK family.

Its subcellular location is the nucleus. Its function is as follows. Transcription factor which regulates nonfermentable carbon utilization. This chain is Glucose starvation modulator protein 1 (GSM1), found in Scheffersomyces stipitis (strain ATCC 58785 / CBS 6054 / NBRC 10063 / NRRL Y-11545) (Yeast).